We begin with the raw amino-acid sequence, 274 residues long: Diaminopimelate epimerase (274 aa).

3 residues coordinate substrate: asparagine 11, glutamine 44, and asparagine 64. The Proton donor role is filled by cysteine 73. Substrate contacts are provided by residues 74-75 (GN), asparagine 157, asparagine 190, and 208-209 (ER). Cysteine 217 functions as the Proton acceptor in the catalytic mechanism. 218-219 (GS) serves as a coordination point for substrate.

The protein belongs to the diaminopimelate epimerase family. In terms of assembly, homodimer.

The protein localises to the cytoplasm. The enzyme catalyses (2S,6S)-2,6-diaminopimelate = meso-2,6-diaminopimelate. Its pathway is amino-acid biosynthesis; L-lysine biosynthesis via DAP pathway; DL-2,6-diaminopimelate from LL-2,6-diaminopimelate: step 1/1. Catalyzes the stereoinversion of LL-2,6-diaminopimelate (L,L-DAP) to meso-diaminopimelate (meso-DAP), a precursor of L-lysine and an essential component of the bacterial peptidoglycan. This is Diaminopimelate epimerase from Pasteurella multocida (strain Pm70).